A 156-amino-acid polypeptide reads, in one-letter code: Acyl carrier protein, mitochondrial (156 aa).

The transit peptide at 1–68 directs the protein to the mitochondrion; that stretch reads MASRVLSAYV…GRVTQLCRQY (68 aa). The Carrier domain occupies 77-152; the sequence is EGIQDRVLYV…EIVDYIADKK (76 aa). At K88 the chain carries N6-acetyllysine. S112 carries the post-translational modification O-(pantetheine 4'-phosphoryl)serine.

Belongs to the acyl carrier protein (ACP) family. In terms of assembly, mammalian complex I is composed of 45 different subunits. Interacts with ETFRF1. Identified in a complex composed of MALSU1, MIEF1 upstream open reading frame protein and NDUFAB1; within the trimeric complex, MIEF1 upstream open reading frame protein functions as a bridging scaffold that interacts with MALSU1 on one side, and with NDUFAB1 on the other side. The complex interacts with the mitochondrial large ribosomal subunit. Interacts with alpha-1-microglobulin chain; this interaction is required for the maintenance of mitochondrial redox homeostasis. Component of the mitochondrial core iron-sulfur cluster (ISC) complex composed of NFS1, LYRM4, NDUFAB1, ISCU, FXN, and FDX2; this complex is a heterohexamer containing two copies of each monomer. Component of the cyteine desulfurase complex composed of NFS1, LYRM4 and NDUFAB1; this complex contributes to the stability and cysteine desulfurase activity of NFS1. In terms of processing, phosphopantetheinylation at Ser-112 is essential for interactions with LYR motif-containing proteins.

It localises to the mitochondrion. In terms of biological role, carrier of the growing fatty acid chain in fatty acid biosynthesis. Accessory and non-catalytic subunit of the mitochondrial membrane respiratory chain NADH dehydrogenase (Complex I), which functions in the transfer of electrons from NADH to the respiratory chain. Accessory protein, of the core iron-sulfur cluster (ISC) assembly complex, that regulates, in association with LYRM4, the stability and the cysteine desulfurase activity of NFS1 and participates in the [2Fe-2S] clusters assembly on the scaffolding protein ISCU. The core iron-sulfur cluster (ISC) assembly complex is involved in the de novo synthesis of a [2Fe-2S] cluster, the first step of the mitochondrial iron-sulfur protein biogenesis. This process is initiated by the cysteine desulfurase complex (NFS1:LYRM4:NDUFAB1) that produces persulfide which is delivered on the scaffold protein ISCU in a FXN-dependent manner. Then this complex is stabilized by FDX2 which provides reducing equivalents to accomplish the [2Fe-2S] cluster assembly. Finally, the [2Fe-2S] cluster is transferred from ISCU to chaperone proteins, including HSCB, HSPA9 and GLRX5. The sequence is that of Acyl carrier protein, mitochondrial from Gorilla gorilla gorilla (Western lowland gorilla).